A 367-amino-acid polypeptide reads, in one-letter code: Histidinol-phosphate aminotransferase 1 (367 aa).

At lysine 229 the chain carries N6-(pyridoxal phosphate)lysine.

This sequence belongs to the class-II pyridoxal-phosphate-dependent aminotransferase family. Histidinol-phosphate aminotransferase subfamily. In terms of assembly, homodimer. Pyridoxal 5'-phosphate serves as cofactor.

The catalysed reaction is L-histidinol phosphate + 2-oxoglutarate = 3-(imidazol-4-yl)-2-oxopropyl phosphate + L-glutamate. It participates in amino-acid biosynthesis; L-histidine biosynthesis; L-histidine from 5-phospho-alpha-D-ribose 1-diphosphate: step 7/9. The polypeptide is Histidinol-phosphate aminotransferase 1 (Idiomarina loihiensis (strain ATCC BAA-735 / DSM 15497 / L2-TR)).